The chain runs to 30 residues: GTHPCQETCVTSTRCSTQGCHCNWPICFKN.

Residues 1 to 30 constitute a cross-link (cyclopeptide (Gly-Asn)); sequence GTHPCQETCVTSTRCSTQGCHCNWPICFKN. Disulfide bonds link Cys5-Cys20, Cys9-Cys22, and Cys15-Cys27.

In terms of processing, this is a cyclic peptide. Detected in stems (at protein level).

Functionally, probably participates in a plant defense mechanism. Does not display any cytotoxic activity towards K562, HeLa, MCF-7, HUVEC or red blood cells. Does not bind to phospholipd membranes containing 1-palmitoyl 2-oleoyl phosphatidylcholine (POPC) or 1-palmitoyl-2-oleophosphatidylethanolamine (POPE). In Pigea enneasperma (Spade flower), this protein is Cyclotide hyen-C.